The chain runs to 361 residues: Myb/SANT-like DNA-binding domain-containing protein 7 (361 aa).

Residues 11–70 (RWSRQETRTLLSILGEAEYIQRLQTVHHNADVYQAVSKRMQQEGFRRTERQCRSKFKVLK) form the Myb-like domain. 2 disordered regions span residues 174-198 (TSDL…SYSS) and 217-272 (RLGV…ARRR). 2 stretches are compositionally biased toward polar residues: residues 187–198 (AGCSQGTPSYSS) and 226–249 (PCTS…SSSR).

The protein is Myb/SANT-like DNA-binding domain-containing protein 7 of Homo sapiens (Human).